Here is a 65-residue protein sequence, read N- to C-terminus: Large ribosomal subunit protein bL35 (65 aa).

A compositionally biased stretch (basic residues) spans 1–11; it reads MPKIKTRRSAA. Residues 1-25 form a disordered region; sequence MPKIKTRRSAAKRFSVTGSGKFRRR.

It belongs to the bacterial ribosomal protein bL35 family.

In Nitratidesulfovibrio vulgaris (strain ATCC 29579 / DSM 644 / CCUG 34227 / NCIMB 8303 / VKM B-1760 / Hildenborough) (Desulfovibrio vulgaris), this protein is Large ribosomal subunit protein bL35.